The sequence spans 54 residues: uncharacterized protein (54 aa).

To B.subtilis XkdX.

This is an uncharacterized protein from Bacillus subtilis (strain 168).